Here is a 544-residue protein sequence, read N- to C-terminus: Protein angel homolog 2 (544 aa).

Belongs to the CCR4/nocturin family.

The chain is Protein angel homolog 2 (Angel2) from Mus musculus (Mouse).